A 317-amino-acid chain; its full sequence is Acetyl-coenzyme A carboxylase carboxyl transferase subunit alpha (317 aa).

Residues 40–293 form the CoA carboxyltransferase C-terminal domain; it reads LEGRVRDAMM…GTVIADALKE (254 aa).

This sequence belongs to the AccA family. Acetyl-CoA carboxylase is a heterohexamer composed of biotin carboxyl carrier protein (AccB), biotin carboxylase (AccC) and two subunits each of ACCase subunit alpha (AccA) and ACCase subunit beta (AccD).

The protein resides in the cytoplasm. It catalyses the reaction N(6)-carboxybiotinyl-L-lysyl-[protein] + acetyl-CoA = N(6)-biotinyl-L-lysyl-[protein] + malonyl-CoA. Its pathway is lipid metabolism; malonyl-CoA biosynthesis; malonyl-CoA from acetyl-CoA: step 1/1. Its function is as follows. Component of the acetyl coenzyme A carboxylase (ACC) complex. First, biotin carboxylase catalyzes the carboxylation of biotin on its carrier protein (BCCP) and then the CO(2) group is transferred by the carboxyltransferase to acetyl-CoA to form malonyl-CoA. The protein is Acetyl-coenzyme A carboxylase carboxyl transferase subunit alpha of Sinorhizobium fredii (strain NBRC 101917 / NGR234).